Here is a 193-residue protein sequence, read N- to C-terminus: Ras-like protein 2 (193 aa).

Residue 12 to 19 (GGGGVGKS) coordinates GTP. The Effector region motif lies at 34–42 (YDPTIEDSY). GTP-binding positions include 59-63 (DTAGQ) and 118-121 (NKCD). Cys-190 carries the post-translational modification Cysteine methyl ester. Cys-190 carries S-geranylgeranyl cysteine lipidation. A propeptide spans 191–193 (KLL) (removed in mature form).

This sequence belongs to the small GTPase superfamily. Ras family.

It localises to the cell membrane. The enzyme catalyses GTP + H2O = GDP + phosphate + H(+). Its function is as follows. Ras proteins bind GDP/GTP and possess intrinsic GTPase activity. In Physarum polycephalum (Slime mold), this protein is Ras-like protein 2 (RAS-2).